We begin with the raw amino-acid sequence, 316 residues long: tRNA-cytidine(32) 2-sulfurtransferase (316 aa).

Residues 45-50 (SGGKDS) carry the PP-loop motif motif. Residues cysteine 120, cysteine 123, and cysteine 211 each contribute to the [4Fe-4S] cluster site.

The protein belongs to the TtcA family. In terms of assembly, homodimer. Mg(2+) is required as a cofactor. Requires [4Fe-4S] cluster as cofactor.

The protein localises to the cytoplasm. It catalyses the reaction cytidine(32) in tRNA + S-sulfanyl-L-cysteinyl-[cysteine desulfurase] + AH2 + ATP = 2-thiocytidine(32) in tRNA + L-cysteinyl-[cysteine desulfurase] + A + AMP + diphosphate + H(+). The protein operates within tRNA modification. Its function is as follows. Catalyzes the ATP-dependent 2-thiolation of cytidine in position 32 of tRNA, to form 2-thiocytidine (s(2)C32). The sulfur atoms are provided by the cysteine/cysteine desulfurase (IscS) system. The protein is tRNA-cytidine(32) 2-sulfurtransferase of Shewanella sediminis (strain HAW-EB3).